We begin with the raw amino-acid sequence, 589 residues long: PAN2-PAN3 deadenylation complex subunit pan3 (589 aa).

The disordered stretch occupies residues 1–32 (MSVRKNSPASPKPTSRSRESSRSPSVTDLKDH). A C3H1-type zinc finger spans residues 34–63 (KAKRTLCRNILLYGSCKHSENGCAFRHDGP). The PABPC-interacting motif-2 (PAM-2) signature appears at 74-94 (YSVKKKLNAASASFQPVRALP). Residues 201-457 (EASRQTISAL…NLELFLQNHI (257 aa)) are pseudokinase domain. Residues lysine 255 and 302–309 (DFYPCTTT) contribute to the ATP site. A coiled-coil region spans residues 458–496 (ESFFPIMSSPYVECEKMERKISDAFQHGRFFNILCKIMF). The knob domain stretch occupies residues 497-589 (IIDNNRASRE…DNVYEMEINS (93 aa)).

Belongs to the protein kinase superfamily. PAN3 family. In terms of assembly, homodimer. Forms a heterotrimer with a catalytic subunit pan2 to form the poly(A)-nuclease (PAN) deadenylation complex. Interacts (via PAM-2 motif) with poly(A)-binding protein pab1 (via PABC domain), conferring substrate specificity of the enzyme complex.

It localises to the cytoplasm. The protein resides in the nucleus. Regulatory subunit of the poly(A)-nuclease (PAN) deadenylation complex, one of two cytoplasmic mRNA deadenylases involved in mRNA turnover. PAN specifically shortens poly(A) tails of RNA and the activity is stimulated by poly(A)-binding protein pab1. PAN deadenylation is followed by rapid degradation of the shortened mRNA tails by the CCR4-NOT complex. Deadenylated mRNAs are then degraded by two alternative mechanisms, namely exosome-mediated 3'-5' exonucleolytic degradation, or deadenylation-dependent mRNA decaping and subsequent 5'-3' exonucleolytic degradation by xrn1. May also be involved in post-transcriptional maturation of mRNA poly(A) tails. ppk26/pan3 acts as a positive regulator for PAN activity, recruiting the catalytic subunit pan2 to mRNA via its interaction with RNA and with pab1. The chain is PAN2-PAN3 deadenylation complex subunit pan3 (ppk26) from Schizosaccharomyces pombe (strain 972 / ATCC 24843) (Fission yeast).